Here is a 387-residue protein sequence, read N- to C-terminus: Succinate--CoA ligase [ADP-forming] subunit beta (387 aa).

The 235-residue stretch at 9–243 (KEILSTYGIP…YSQLDPLEIT (235 aa)) folds into the ATP-grasp domain. Residues K45, 52-54 (GRG), E98, V101, and E106 each bind ATP. Mg(2+)-binding residues include N198 and D212. Substrate contacts are provided by residues N263 and 320-322 (GIM).

This sequence belongs to the succinate/malate CoA ligase beta subunit family. Heterotetramer of two alpha and two beta subunits. The cofactor is Mg(2+).

The enzyme catalyses succinate + ATP + CoA = succinyl-CoA + ADP + phosphate. It catalyses the reaction GTP + succinate + CoA = succinyl-CoA + GDP + phosphate. It functions in the pathway carbohydrate metabolism; tricarboxylic acid cycle; succinate from succinyl-CoA (ligase route): step 1/1. In terms of biological role, succinyl-CoA synthetase functions in the citric acid cycle (TCA), coupling the hydrolysis of succinyl-CoA to the synthesis of either ATP or GTP and thus represents the only step of substrate-level phosphorylation in the TCA. The beta subunit provides nucleotide specificity of the enzyme and binds the substrate succinate, while the binding sites for coenzyme A and phosphate are found in the alpha subunit. The protein is Succinate--CoA ligase [ADP-forming] subunit beta of Trichlorobacter lovleyi (strain ATCC BAA-1151 / DSM 17278 / SZ) (Geobacter lovleyi).